An 846-amino-acid chain; its full sequence is Translation initiation factor IF-2 (846 aa).

The interval 94–263 (QRSPEEIQAE…HGFQNPTGPV (170 aa)) is disordered. Residues 96–135 (SPEEIQAEQKRELEERRAAENAARDKVEAEVRQRNEEQAR) show a composition bias toward basic and acidic residues. Low complexity-rich tracts occupy residues 136 to 148 (RQAA…APAP) and 158 to 176 (AAPV…ASED). Basic and acidic residues-rich tracts occupy residues 177 to 206 (AAAR…RGEA) and 230 to 239 (TTDEESDGAR). Residues 240-253 (RGRGGKSKLKKRNQ) show a composition bias toward basic residues. In terms of domain architecture, tr-type G spans 346–513 (SRAPVVTVMG…AVLLQAEILE (168 aa)). Residues 355-362 (GHVDHGKT) form a G1 region. 355–362 (GHVDHGKT) is a GTP binding site. The tract at residues 380–384 (GITQH) is G2. A G3 region spans residues 401–404 (DTPG). GTP-binding positions include 401–405 (DTPGH) and 455–458 (NKID). The G4 stretch occupies residues 455–458 (NKID). Residues 491–493 (SAK) are G5.

This sequence belongs to the TRAFAC class translation factor GTPase superfamily. Classic translation factor GTPase family. IF-2 subfamily.

The protein localises to the cytoplasm. One of the essential components for the initiation of protein synthesis. Protects formylmethionyl-tRNA from spontaneous hydrolysis and promotes its binding to the 30S ribosomal subunits. Also involved in the hydrolysis of GTP during the formation of the 70S ribosomal complex. This Pseudomonas putida (strain ATCC 700007 / DSM 6899 / JCM 31910 / BCRC 17059 / LMG 24140 / F1) protein is Translation initiation factor IF-2.